The primary structure comprises 441 residues: N-acetylmuramyl-L-alanine amidase (441 aa).

The first 25 residues, 1–25 (MKTKTLFIFSAILTLSIFAPNETFA), serve as a signal peptide directing secretion.

The protein belongs to the peptidase S12 family.

It carries out the reaction Hydrolyzes the link between N-acetylmuramoyl residues and L-amino acid residues in certain cell-wall glycopeptides.. It functions in the pathway cell wall biogenesis; peptidoglycan recycling. Functionally, involved in muropeptide recycling. Hydrolyzes the amide bond between N-acetylmuramic acid (MurNAc) and the L-alanine residue of the stem peptide. Cannot hydrolyze muropeptides containing N-acetylglucosamine (GlcNAc) at the non-reducing end. The sequence is that of N-acetylmuramyl-L-alanine amidase from Bacillus subtilis (strain 168).